A 218-amino-acid polypeptide reads, in one-letter code: Elongation factor Ts (218 aa).

The interval 82–85 (TDFV) is involved in Mg(2+) ion dislocation from EF-Tu.

Belongs to the EF-Ts family.

It localises to the cytoplasm. In terms of biological role, associates with the EF-Tu.GDP complex and induces the exchange of GDP to GTP. It remains bound to the aminoacyl-tRNA.EF-Tu.GTP complex up to the GTP hydrolysis stage on the ribosome. The sequence is that of Elongation factor Ts from Prochlorococcus marinus (strain NATL2A).